A 1263-amino-acid polypeptide reads, in one-letter code: Multidrug resistance protein sirA (1263 aa).

A disordered region spans residues 1–21 (MAEPESEKPSSAQGGGLPSSD). 4 helical membrane-spanning segments follow: residues 57–77 (LISA…ILFI), 104–124 (IALY…IFTN), 179–199 (KIGL…IGFV), and 206–226 (FILT…SGFM). One can recognise an ABC transmembrane type-1 1 domain in the interval 57–347 (LISAFFAAVS…VGPHLQAMSL (291 aa)). N-linked (GlcNAc...) asparagine glycosylation occurs at N232. 2 helical membrane passes run 284–304 (VMGW…GLAI) and 318–338 (VGAI…FGNV). In terms of domain architecture, ABC transporter 1 spans 380–625 (IEFRNVSHVY…EGLYQTFVRR (246 aa)). N384 carries N-linked (GlcNAc...) asparagine glycosylation. 415–422 (GASGSGKS) serves as a coordination point for ATP. N469 carries N-linked (GlcNAc...) asparagine glycosylation. The disordered stretch occupies residues 635 to 672 (PPHARITPAVDTPASPQHRLSEKTGSIYGQGESEAADK). Transmembrane regions (helical) follow at residues 699 to 719 (VTGI…SVFF), 740 to 760 (FWAA…GVQG), 817 to 839 (VFLG…SLAV), 843 to 865 (LTLV…LKLV), 930 to 950 (LSEA…ATLV), and 960 to 980 (FFIV…VFAF). Residues 699–986 (VTGIASAVIS…VFAFAPDFGK (288 aa)) form the ABC transmembrane type-1 2 domain. Residues 1021–1259 (VDVSNVVFYY…RGSYYDSVNL (239 aa)) form the ABC transporter 2 domain. 1056-1063 (GGSGSGKS) is an ATP binding site.

Belongs to the ABC transporter superfamily. ABCB family. Multidrug resistance exporter (TC 3.A.1.201) subfamily.

It is found in the cell membrane. It catalyses the reaction ATP + H2O + xenobioticSide 1 = ADP + phosphate + xenobioticSide 2.. Its function is as follows. Sirodesmin transporter that provides the dual role of sirodesmin export and self-protection. Also provides tolerance to gliotoxin. The protein is Multidrug resistance protein sirA of Leptosphaeria maculans (Blackleg fungus).